Consider the following 248-residue polypeptide: Type II methyltransferase M.AquIA (248 aa).

In terms of domain architecture, SAM-dependent MTase C5-type spans 3-248 (KKLISLFSGA…IKDRIKNHGY (246 aa)). Residue C82 is part of the active site.

The protein belongs to the class I-like SAM-binding methyltransferase superfamily. C5-methyltransferase family. As to quaternary structure, heterodimer of an alpha and a beta subunit.

It carries out the reaction a 2'-deoxycytidine in DNA + S-adenosyl-L-methionine = a 5-methyl-2'-deoxycytidine in DNA + S-adenosyl-L-homocysteine + H(+). In terms of biological role, a methylase, recognizes the double-stranded sequence 5'-CYCGRG-3', methylates C-1 on both strands, and protects the DNA from cleavage by the AquI endonuclease. The sequence is that of Type II methyltransferase M.AquIA (aquIMA) from Picosynechococcus sp. (strain ATCC 27264 / PCC 7002 / PR-6) (Agmenellum quadruplicatum).